We begin with the raw amino-acid sequence, 327 residues long: Phenylalanine--tRNA ligase alpha subunit (327 aa).

Glu252 is a Mg(2+) binding site.

It belongs to the class-II aminoacyl-tRNA synthetase family. Phe-tRNA synthetase alpha subunit type 1 subfamily. As to quaternary structure, tetramer of two alpha and two beta subunits. The cofactor is Mg(2+).

The protein localises to the cytoplasm. The enzyme catalyses tRNA(Phe) + L-phenylalanine + ATP = L-phenylalanyl-tRNA(Phe) + AMP + diphosphate + H(+). This chain is Phenylalanine--tRNA ligase alpha subunit, found in Glaesserella parasuis serovar 5 (strain SH0165) (Haemophilus parasuis).